The primary structure comprises 268 residues: Riboflavin transport system permease protein RibX (268 aa).

The next 6 helical transmembrane spans lie at 24-44 (ALGLPVTLMLLLVFWQAGVTL), 76-96 (LATLSAALGGFTLALIIALIL), 119-139 (AIPVVAVAPLIILWFGAGLTS), 140-160 (KVLVAALITFLPILINTVVAI), 185-205 (VEAPLALPVLFGGVRTGLALA), and 236-256 (LIFVALATLALITLTLYVLAG). The 181-residue stretch at 75–255 (TLATLSAALG…LITLTLYVLA (181 aa)) folds into the ABC transmembrane type-1 domain.

Belongs to the binding-protein-dependent transport system permease family. As to quaternary structure, the complex is likely composed of an ATP-binding protein, a transmembrane protein (RibX) and a solute-binding protein (RibY).

Its subcellular location is the cell membrane. In terms of biological role, part of an ABC transporter complex that transports riboflavin into the cell. The polypeptide is Riboflavin transport system permease protein RibX (Chloroflexus aurantiacus (strain ATCC 29366 / DSM 635 / J-10-fl)).